A 651-amino-acid chain; its full sequence is Kinesin-like protein KIF22-A (651 aa).

In terms of domain architecture, Kinesin motor spans 31 to 359 (RVRVAVRLRP…LNFAAKSKQI (329 aa)). 116–123 (GPTGAGKT) provides a ligand contact to ATP. The segment at 366-413 (QETTQTVVQPAMKRPREETGHIAGSQKRKKSKNDSTESSPNSSMDTAG) is disordered. Residues 401-410 (TESSPNSSMD) show a composition bias toward polar residues. Residues 452–498 (KRERMALLKKWEESQMEIERLKEKQKELEQKAMEAEARLEKSNNSDL) adopt a coiled-coil conformation. An Important for regulated proteolytic degradation motif is present at residues 561–564 (GLEN).

This sequence belongs to the TRAFAC class myosin-kinesin ATPase superfamily. Kinesin family. In terms of processing, ubiquitinated, leading to its subsequent proteasomal degradation.

It is found in the nucleus. The protein localises to the cytoplasm. It localises to the cytoskeleton. Functionally, kinesin family member that is involved in spindle formation and the movements of chromosomes during mitosis and meiosis. Binds to microtubules and to DNA. The sequence is that of Kinesin-like protein KIF22-A (kif22-a) from Xenopus laevis (African clawed frog).